The sequence spans 287 residues: MERSVTAGKWLAYCRLMRIDKPIGSLLLLWPTLWALWLAGGGAPAPWTLFVFVAGVFLMRAAGCVINDYADRHFDGHVKRTASRPLPSGEVSEQSAKILFVVLVLLAFGLVLTLNKMTIWLSVAGLVLAWVYPFMKRVSHLPQFVLGAAFGWSIPMAYAAVSESLPATCWMMFLAYICWTVAYDTQYAMVDRDDDLKIGVKSTAILFGRFDNIIIGLLQFSMLALLLALGNITGLGIPYTISLLVAAGMFIYQQILTAGRERDACFKAFHNNKYAGMAIFIGVLFGL.

Transmembrane regions (helical) follow at residues isoleucine 23 to glycine 40, isoleucine 98 to threonine 118, leucine 141 to valine 161, glutamate 163 to tyrosine 183, isoleucine 213 to threonine 233, and leucine 235 to isoleucine 255.

Belongs to the UbiA prenyltransferase family. The cofactor is Mg(2+).

It is found in the cell inner membrane. It catalyses the reaction all-trans-octaprenyl diphosphate + 4-hydroxybenzoate = 4-hydroxy-3-(all-trans-octaprenyl)benzoate + diphosphate. It participates in cofactor biosynthesis; ubiquinone biosynthesis. Functionally, catalyzes the prenylation of para-hydroxybenzoate (PHB) with an all-trans polyprenyl group. Mediates the second step in the final reaction sequence of ubiquinone-8 (UQ-8) biosynthesis, which is the condensation of the polyisoprenoid side chain with PHB, generating the first membrane-bound Q intermediate 3-octaprenyl-4-hydroxybenzoate. This chain is 4-hydroxybenzoate octaprenyltransferase, found in Pectobacterium atrosepticum (strain SCRI 1043 / ATCC BAA-672) (Erwinia carotovora subsp. atroseptica).